Reading from the N-terminus, the 590-residue chain is Phenylalanine--tRNA ligase beta subunit (590 aa).

In terms of domain architecture, B5 spans Met-276 to Pro-382. Mg(2+) is bound by residues Asn-360, Asp-366, Glu-369, and Asp-370.

It belongs to the phenylalanyl-tRNA synthetase beta subunit family. Type 2 subfamily. As to quaternary structure, tetramer of two alpha and two beta subunits. Requires Mg(2+) as cofactor.

It localises to the cytoplasm. The enzyme catalyses tRNA(Phe) + L-phenylalanine + ATP = L-phenylalanyl-tRNA(Phe) + AMP + diphosphate + H(+). In Methanopyrus kandleri (strain AV19 / DSM 6324 / JCM 9639 / NBRC 100938), this protein is Phenylalanine--tRNA ligase beta subunit.